A 322-amino-acid polypeptide reads, in one-letter code: 1-aminocyclopropane-1-carboxylate oxidase 1 (322 aa).

Residues 159–259 enclose the Fe2OG dioxygenase domain; the sequence is PTFGTKVSSY…RMSIASFYNP (101 aa). Residues H183, D185, and H240 each coordinate Fe cation.

It belongs to the iron/ascorbate-dependent oxidoreductase family. It depends on Fe cation as a cofactor.

The enzyme catalyses 1-aminocyclopropane-1-carboxylate + L-ascorbate + O2 = ethene + L-dehydroascorbate + hydrogen cyanide + CO2 + 2 H2O. It participates in alkene biosynthesis; ethylene biosynthesis via S-adenosyl-L-methionine; ethylene from S-adenosyl-L-methionine: step 2/2. The polypeptide is 1-aminocyclopropane-1-carboxylate oxidase 1 (ACO1) (Oryza sativa subsp. japonica (Rice)).